Consider the following 296-residue polypeptide: 2-methylisocitrate lyase (296 aa).

Residue 45–47 participates in substrate binding; it reads SGG. Mg(2+) is bound by residues Asp-85 and Asp-87. Substrate is bound by residues 123–124, Arg-158, Glu-188, 210–212, Arg-241, and Arg-270; these read CG and NIT.

It belongs to the isocitrate lyase/PEP mutase superfamily. Methylisocitrate lyase family. In terms of assembly, homotetramer; dimer of dimers. Requires Mg(2+) as cofactor.

The enzyme catalyses (2S,3R)-3-hydroxybutane-1,2,3-tricarboxylate = pyruvate + succinate. It functions in the pathway organic acid metabolism; propanoate degradation. In terms of biological role, involved in the catabolism of short chain fatty acids (SCFA) via the 2-methylcitrate cycle I (propionate degradation route). Catalyzes the thermodynamically favored C-C bond cleavage of (2R,3S)-2-methylisocitrate to yield pyruvate and succinate via an alpha-carboxy-carbanion intermediate. In Escherichia coli (strain K12), this protein is 2-methylisocitrate lyase.